Reading from the N-terminus, the 313-residue chain is Ornithine carbamoyltransferase (313 aa).

Residues 57-60, Q84, R108, and 135-138 contribute to the carbamoyl phosphate site; these read STRT and HPTQ. L-ornithine-binding positions include N167, D231, and 235–236; that span reads SM. Carbamoyl phosphate contacts are provided by residues 272–273 and R300; that span reads CL.

It belongs to the aspartate/ornithine carbamoyltransferase superfamily. OTCase family.

The protein resides in the cytoplasm. The catalysed reaction is carbamoyl phosphate + L-ornithine = L-citrulline + phosphate + H(+). Its pathway is amino-acid biosynthesis; L-arginine biosynthesis; L-arginine from L-ornithine and carbamoyl phosphate: step 1/3. Functionally, reversibly catalyzes the transfer of the carbamoyl group from carbamoyl phosphate (CP) to the N(epsilon) atom of ornithine (ORN) to produce L-citrulline. This chain is Ornithine carbamoyltransferase, found in Caldanaerobacter subterraneus subsp. tengcongensis (strain DSM 15242 / JCM 11007 / NBRC 100824 / MB4) (Thermoanaerobacter tengcongensis).